Here is a 1584-residue protein sequence, read N- to C-terminus: Dicer-like protein 1 (1584 aa).

A disordered region spans residues Glu31–Glu60. The region spanning Leu129 to Leu310 is the Helicase ATP-binding domain. Leu142–Thr149 is a binding site for ATP. The DEAH box signature appears at Asp255–His258. Residues Lys448–Thr621 form the Helicase C-terminal domain. The Dicer dsRNA-binding fold domain occupies Ser654–Glu744. The PAZ domain occupies Lys894 to Pro1028. 2 consecutive RNase III domains span residues Val1052–Gln1207 and Ala1258–Glu1424. Residues Glu1298, Asp1410, and Glu1413 each contribute to the Mg(2+) site. Residues Thr1458–Gly1545 form the DRBM domain. Zn(2+)-binding residues include Cys1470, His1516, Cys1557, and Cys1559.

Belongs to the helicase family. Dicer subfamily. Mg(2+) serves as cofactor. Requires Mn(2+) as cofactor.

Functionally, dicer-like endonuclease involved in cleaving double-stranded RNA in the RNA interference (RNAi) pathway. Produces 21 to 25 bp dsRNAs (siRNAs) which target the selective destruction of homologous RNAs leading to sequence-specific suppression of gene expression, called post-transcriptional gene silencing (PTGS). Part of a broad host defense response against viral infection and transposons. Controls the expression of the non-LTR retrotransposon Tad in the African strain, Adiomopoume. The chain is Dicer-like protein 1 (dcl-1) from Neurospora crassa (strain ATCC 24698 / 74-OR23-1A / CBS 708.71 / DSM 1257 / FGSC 987).